Reading from the N-terminus, the 686-residue chain is Acyl-CoA synthetase short-chain family member 3, mitochondrial (686 aa).

The transit peptide at 1 to 29 directs the protein to the mitochondrion; sequence MKPSWLQCRKVTGAGGLGGSLPASSPARG. CoA is bound at residue 226–229; that stretch reads EPGR. ATP is bound by residues 424–426 and 445–450; these read GER and DHWWQT. N6-succinyllysine is present on Lys-517. The residue at position 523 (Lys-523) is an N6-acetyllysine. Positions 538, 553, and 564 each coordinate ATP. Position 623 (Arg-623) interacts with CoA.

The protein belongs to the ATP-dependent AMP-binding enzyme family.

It localises to the mitochondrion matrix. The enzyme catalyses acetate + ATP + CoA = acetyl-CoA + AMP + diphosphate. The catalysed reaction is propanoate + ATP + CoA = propanoyl-CoA + AMP + diphosphate. It catalyses the reaction butanoate + ATP + CoA = butanoyl-CoA + AMP + diphosphate. Functionally, catalyzes the synthesis of acetyl-CoA from short-chain fatty acids. Propionate is the preferred substrate but can also utilize acetate and butyrate with a much lower affinity. The protein is Acyl-CoA synthetase short-chain family member 3, mitochondrial (ACSS3) of Bos taurus (Bovine).